The primary structure comprises 367 residues: Inner membrane amino-acid ABC transporter permease protein YhdY (367 aa).

Topologically, residues Met-1–Leu-36 are cytoplasmic. A helical membrane pass occupies residues Leu-37–Phe-57. Topologically, residues Leu-58–Arg-99 are periplasmic. The chain crosses the membrane as a helical span at residues Ile-100–Pro-120. The Cytoplasmic portion of the chain corresponds to His-121–Tyr-125. A helical transmembrane segment spans residues Ile-126–Phe-146. Over Ala-147–Thr-162 the chain is Periplasmic. The ABC transmembrane type-1 domain maps to Leu-159 to Ser-353. The chain crosses the membrane as a helical span at residues Leu-163–Gly-183. At Arg-184–Arg-192 the chain is on the cytoplasmic side. Residues Ile-193–Met-213 form a helical membrane-spanning segment. Topologically, residues Ser-214–Arg-233 are periplasmic. Residues Ala-234–Leu-254 form a helical membrane-spanning segment. At Gln-255–Gly-291 the chain is on the cytoplasmic side. Residues Leu-292–Phe-312 form a helical membrane-spanning segment. Residues Asp-313–Ala-326 are Periplasmic-facing. The chain crosses the membrane as a helical span at residues Trp-327–Phe-347. Over Ser-348–His-367 the chain is Cytoplasmic.

Belongs to the binding-protein-dependent transport system permease family. HisMQ subfamily.

It localises to the cell inner membrane. Its function is as follows. Probably part of the binding-protein-dependent transport system YdhWXYZ for an amino acid; probably responsible for the translocation of the substrate across the membrane. This Escherichia coli (strain K12) protein is Inner membrane amino-acid ABC transporter permease protein YhdY (yhdY).